Reading from the N-terminus, the 326-residue chain is L-carnitine dehydrogenase (326 aa).

19–24 is a binding site for NAD(+); sequence GTGVIG.

It belongs to the 3-hydroxyacyl-CoA dehydrogenase family. L-carnitine dehydrogenase subfamily. As to quaternary structure, homodimer.

The protein localises to the cytoplasm. The enzyme catalyses carnitine + NAD(+) = 3-dehydrocarnitine + NADH + H(+). It participates in amine and polyamine metabolism; carnitine metabolism. Catalyzes the NAD(+)-dependent oxidation of L-carnitine to 3-dehydrocarnitine. The polypeptide is L-carnitine dehydrogenase (Bacillus cereus (strain ZK / E33L)).